The following is a 612-amino-acid chain: Dihydroxy-acid dehydratase (612 aa).

Position 81 (D81) interacts with Mg(2+). Residue C122 coordinates [2Fe-2S] cluster. Positions 123 and 124 each coordinate Mg(2+). Position 124 is an N6-carboxylysine (K124). [2Fe-2S] cluster is bound at residue C195. Residue E491 participates in Mg(2+) binding. S517 functions as the Proton acceptor in the catalytic mechanism.

It belongs to the IlvD/Edd family. Homodimer. [2Fe-2S] cluster serves as cofactor. Requires Mg(2+) as cofactor.

It carries out the reaction (2R)-2,3-dihydroxy-3-methylbutanoate = 3-methyl-2-oxobutanoate + H2O. The catalysed reaction is (2R,3R)-2,3-dihydroxy-3-methylpentanoate = (S)-3-methyl-2-oxopentanoate + H2O. It participates in amino-acid biosynthesis; L-isoleucine biosynthesis; L-isoleucine from 2-oxobutanoate: step 3/4. Its pathway is amino-acid biosynthesis; L-valine biosynthesis; L-valine from pyruvate: step 3/4. In terms of biological role, functions in the biosynthesis of branched-chain amino acids. Catalyzes the dehydration of (2R,3R)-2,3-dihydroxy-3-methylpentanoate (2,3-dihydroxy-3-methylvalerate) into 2-oxo-3-methylpentanoate (2-oxo-3-methylvalerate) and of (2R)-2,3-dihydroxy-3-methylbutanoate (2,3-dihydroxyisovalerate) into 2-oxo-3-methylbutanoate (2-oxoisovalerate), the penultimate precursor to L-isoleucine and L-valine, respectively. The chain is Dihydroxy-acid dehydratase from Rhizobium johnstonii (strain DSM 114642 / LMG 32736 / 3841) (Rhizobium leguminosarum bv. viciae).